Here is a 373-residue protein sequence, read N- to C-terminus: Lipoyl synthase, mitochondrial (373 aa).

Residues 1 to 26 constitute a mitochondrion transit peptide; it reads MALRCWDAARSLGSRIFGRYACSVRA. 7 residues coordinate [4Fe-4S] cluster: cysteine 105, cysteine 110, cysteine 116, cysteine 136, cysteine 140, cysteine 143, and serine 351. Residues 121–340 form the Radical SAM core domain; that stretch reads EYATATATIM…EEVGNELGFH (220 aa).

It belongs to the radical SAM superfamily. Lipoyl synthase family. The cofactor is [4Fe-4S] cluster.

The protein resides in the mitochondrion. It carries out the reaction [[Fe-S] cluster scaffold protein carrying a second [4Fe-4S](2+) cluster] + N(6)-octanoyl-L-lysyl-[protein] + 2 oxidized [2Fe-2S]-[ferredoxin] + 2 S-adenosyl-L-methionine + 4 H(+) = [[Fe-S] cluster scaffold protein] + N(6)-[(R)-dihydrolipoyl]-L-lysyl-[protein] + 4 Fe(3+) + 2 hydrogen sulfide + 2 5'-deoxyadenosine + 2 L-methionine + 2 reduced [2Fe-2S]-[ferredoxin]. Its pathway is protein modification; protein lipoylation via endogenous pathway; protein N(6)-(lipoyl)lysine from octanoyl-[acyl-carrier-protein]: step 2/2. In terms of biological role, catalyzes the radical-mediated insertion of two sulfur atoms into the C-6 and C-8 positions of the octanoyl moiety bound to the lipoyl domains of lipoate-dependent enzymes, thereby converting the octanoylated domains into lipoylated derivatives. This is Lipoyl synthase, mitochondrial (Lias) from Rattus norvegicus (Rat).